We begin with the raw amino-acid sequence, 352 residues long: UDP-N-acetylglucosamine--N-acetylmuramyl-(pentapeptide) pyrophosphoryl-undecaprenol N-acetylglucosamine transferase (352 aa).

Residues 11–13, N120, R161, S188, and Q286 each bind UDP-N-acetyl-alpha-D-glucosamine; that span reads TGG.

Belongs to the glycosyltransferase 28 family. MurG subfamily.

The protein localises to the cell inner membrane. It catalyses the reaction di-trans,octa-cis-undecaprenyl diphospho-N-acetyl-alpha-D-muramoyl-L-alanyl-D-glutamyl-meso-2,6-diaminopimeloyl-D-alanyl-D-alanine + UDP-N-acetyl-alpha-D-glucosamine = di-trans,octa-cis-undecaprenyl diphospho-[N-acetyl-alpha-D-glucosaminyl-(1-&gt;4)]-N-acetyl-alpha-D-muramoyl-L-alanyl-D-glutamyl-meso-2,6-diaminopimeloyl-D-alanyl-D-alanine + UDP + H(+). It participates in cell wall biogenesis; peptidoglycan biosynthesis. Its function is as follows. Cell wall formation. Catalyzes the transfer of a GlcNAc subunit on undecaprenyl-pyrophosphoryl-MurNAc-pentapeptide (lipid intermediate I) to form undecaprenyl-pyrophosphoryl-MurNAc-(pentapeptide)GlcNAc (lipid intermediate II). The sequence is that of UDP-N-acetylglucosamine--N-acetylmuramyl-(pentapeptide) pyrophosphoryl-undecaprenol N-acetylglucosamine transferase from Prochlorococcus marinus (strain NATL1A).